We begin with the raw amino-acid sequence, 123 residues long: Kininogen (123 aa).

Post-translationally, bradykinin is released from kininogen by kallikrein. N-glycosylated. Contains sulfated N-acetylglucosamine and O-acetylated sialic acids as terminal elements on biantennary and triantennary N-glycans.

Inhibits papain and ficin (cysteine proteinases) but not trypsin (a serine proteinase). This is Kininogen from Gadus morhua (Atlantic cod).